A 347-amino-acid polypeptide reads, in one-letter code: Gamma-glutamyl hydrolase 2 (347 aa).

An N-terminal signal peptide occupies residues 1–22; the sequence is MWSYVWLPLVALSLFKDSIIMA. The Gamma-glutamyl hydrolase domain occupies 45 to 341; that stretch reads APDPNLNYRP…IGYDEVYIFT (297 aa). The active-site Nucleophile is Cys-155. The active-site Proton donor is His-268.

Belongs to the peptidase C26 family. Expressed in roots, in leaves, stems and siliques.

The protein resides in the vacuole. The protein localises to the secreted. Its subcellular location is the extracellular space. It is found in the cell wall. It carries out the reaction (6S)-5,6,7,8-tetrahydrofolyl-(gamma-L-Glu)(n) + (n-1) H2O = (6S)-5,6,7,8-tetrahydrofolate + (n-1) L-glutamate. In terms of biological role, cleaves the polyglutamate sidechains of folate polyglutamates in the vacuole. Is important for polyglutamyl tail length determination before vacuolar exit. Plays a role on folate stability and intracellular folate content. Has endopeptidase activity against 4-amino-10-methylpteroyl penta-, tetra-, tri- and di-gamma-L-glutamate substrates and is responsible for the production of folic acid, also called pteroylglutamic acid (PteGlu) from teroylpolyglutamates. In Arabidopsis thaliana (Mouse-ear cress), this protein is Gamma-glutamyl hydrolase 2 (GGH2).